A 159-amino-acid polypeptide reads, in one-letter code: UPF0303 protein Ping_1243 (159 aa).

The protein belongs to the UPF0303 family.

The protein is UPF0303 protein Ping_1243 of Psychromonas ingrahamii (strain DSM 17664 / CCUG 51855 / 37).